The primary structure comprises 92 residues: Small ribosomal subunit protein uS19 (92 aa).

The protein belongs to the universal ribosomal protein uS19 family.

Functionally, protein S19 forms a complex with S13 that binds strongly to the 16S ribosomal RNA. The protein is Small ribosomal subunit protein uS19 of Hyphomonas neptunium (strain ATCC 15444).